Reading from the N-terminus, the 129-residue chain is DNA-directed RNA polymerase subunit omega (129 aa).

Positions 77-98 (VDEPESEVVPALSSAPQNPEAI) are disordered.

This sequence belongs to the RNA polymerase subunit omega family. As to quaternary structure, the RNAP catalytic core consists of 2 alpha, 1 beta, 1 beta' and 1 omega subunit. When a sigma factor is associated with the core the holoenzyme is formed, which can initiate transcription.

It catalyses the reaction RNA(n) + a ribonucleoside 5'-triphosphate = RNA(n+1) + diphosphate. Promotes RNA polymerase assembly. Latches the N- and C-terminal regions of the beta' subunit thereby facilitating its interaction with the beta and alpha subunits. This chain is DNA-directed RNA polymerase subunit omega, found in Methylocella silvestris (strain DSM 15510 / CIP 108128 / LMG 27833 / NCIMB 13906 / BL2).